The primary structure comprises 352 residues: D-arabitol-phosphate dehydrogenase (352 aa).

Residues cysteine 43, histidine 65, cysteine 96, cysteine 99, cysteine 102, cysteine 110, and glutamate 151 each coordinate Mn(2+).

This sequence belongs to the zinc-containing alcohol dehydrogenase family. As to quaternary structure, homotetramer. The cofactor is Mn(2+).

The catalysed reaction is D-arabinitol 1-phosphate + NAD(+) = D-xylulose 5-phosphate + NADH + H(+). With respect to regulation, inhibited by EDTA, 4-hydroxymercuribenzoic acid (PHMB), mercury and zinc ions at a concentration of 2 mM. Its function is as follows. Involved in the arabitol catabolism via the arabitol phosphate route. Catalyzes only the transformation of D-arabitol 1-phosphate (Arb1P) and D-arabitol 5-phosphate (Arb5P) into D-xylulose 5-phosphate (Xlu5P) and ribulose 5-phosphate, respectively. It can use both NAD and NADP. This chain is D-arabitol-phosphate dehydrogenase, found in Enterococcus avium (Streptococcus avium).